The chain runs to 163 residues: Transcriptional repressor NrdR (163 aa).

A zinc finger lies at 3 to 34 (CPFCRHDDSRVVDSRTTDDGSSIRRRRQCPNC). The ATP-cone domain occupies 46–136 (LSVIKRSGAP…VYQAFDSLAD (91 aa)).

It belongs to the NrdR family. Zn(2+) is required as a cofactor.

In terms of biological role, negatively regulates transcription of bacterial ribonucleotide reductase nrd genes and operons by binding to NrdR-boxes. This chain is Transcriptional repressor NrdR, found in Kineococcus radiotolerans (strain ATCC BAA-149 / DSM 14245 / SRS30216).